We begin with the raw amino-acid sequence, 808 residues long: Ribosome biogenesis protein BOP1 homolog (808 aa).

Composition is skewed to low complexity over residues 1 to 25 (MTSPKGKPSPKRSAPAPATAALTPC) and 33 to 50 (ATSSASASASSHISSSFD). Positions 1-55 (MTSPKGKPSPKRSAPAPATAALTPCAEERTEGATSSASASASSHISSSFDSPRDD) are disordered. 5 WD repeats span residues 430–469 (GHTATVRSVSVSPNGQYLATGCDDHLVRVFEVQTGRLMKR), 640–680 (KFSE…RRFK), 682–720 (SGGVTTCLSIHPEGDNFLVGDTTSHTSWFDMDFSDKPYK), 724–766 (SHKG…DYNK), and 777–808 (KHQRPVYAVAWHPTLAWLFTSTEDGVVTAWTE).

It belongs to the WD repeat BOP1/ERB1 family.

The protein localises to the nucleus. It is found in the nucleolus. It localises to the nucleoplasm. Functionally, required for maturation of ribosomal RNAs and formation of the large ribosomal subunit. The protein is Ribosome biogenesis protein BOP1 homolog of Leishmania major.